A 97-amino-acid chain; its full sequence is Serine protease inhibitor Kazal-type 8 (97 aa).

The first 21 residues, 1-21 (MKGICSDAILVLATSMWMAFA), serve as a signal peptide directing secretion. Residues 36-96 (DKTIVECLKN…TKLYDGQCEN (61 aa)) enclose the Kazal-like domain. 3 disulfide bridges follow: cysteine 42-cysteine 76, cysteine 49-cysteine 73, and cysteine 62-cysteine 94. Asparagine 85 carries an N-linked (GlcNAc...) asparagine glycan.

It localises to the secreted. In terms of biological role, probable serine protease inhibitor. This is Serine protease inhibitor Kazal-type 8 (SPINK8) from Homo sapiens (Human).